A 1396-amino-acid chain; its full sequence is DNA-directed RNA polymerase subunit beta' (1396 aa).

Zn(2+)-binding residues include C72, C74, C87, and C90. Residues D463, D465, and D467 each coordinate Mg(2+). The Zn(2+) site is built by C814, C889, C896, and C899.

Belongs to the RNA polymerase beta' chain family. As to quaternary structure, the RNAP catalytic core consists of 2 alpha, 1 beta, 1 beta' and 1 omega subunit. When a sigma factor is associated with the core the holoenzyme is formed, which can initiate transcription. The cofactor is Mg(2+). Zn(2+) serves as cofactor.

It carries out the reaction RNA(n) + a ribonucleoside 5'-triphosphate = RNA(n+1) + diphosphate. In terms of biological role, DNA-dependent RNA polymerase catalyzes the transcription of DNA into RNA using the four ribonucleoside triphosphates as substrates. The polypeptide is DNA-directed RNA polymerase subunit beta' (Chlamydia muridarum (strain MoPn / Nigg)).